We begin with the raw amino-acid sequence, 96 residues long: Protein TraA (96 aa).

This chain is Protein TraA (traA), found in Escherichia coli.